The following is a 241-amino-acid chain: Beta-nerve growth factor (241 aa).

An N-terminal signal peptide occupies residues 1–18 (MSMLFYTLITAFLIGIQA). Residues 19–121 (EPHSESNVPA…PFNRTHRSKR (103 aa)) constitute a propeptide that is removed on maturation. Asparagine 69 and asparagine 114 each carry an N-linked (GlcNAc...) asparagine glycan. 3 disulfide bridges follow: cysteine 136/cysteine 201, cysteine 179/cysteine 229, and cysteine 189/cysteine 231. The a 1-acyl-sn-glycero-3-phospho-(1D-myo-inositol) site is built by tyrosine 173 and lysine 209. Lysine 209 contacts a 1-acyl-sn-glycero-3-phospho-L-serine.

Belongs to the NGF-beta family. In terms of assembly, homodimer. The homodimer interacts with a single NTRK1 chain. The homodimer interacts with a single NGFR chain. The NGF dimer interacts with a single SORCS2 chain (via extracellular domain). The NGF precursor (proNGF) binds to a receptor complex formed by SORT1 and NGFR, which leads to NGF endocytosis. Both mature NGF and the immature NGF precursor (proNGF) interact with SORCS2 and with the heterodimer formed by SORCS2 and NGFR (via extracellular domains). The NGF precursor (proNGF) has much higher affinity for SORCS2 than mature NGF. The NGF precursor (proNGF) has much higher affinity for SORT1 than mature NGF. Interacts with ADAM10 in a divalent cation-dependent manner. Interaction with SORCS3.

The protein resides in the secreted. It localises to the endosome lumen. In terms of biological role, nerve growth factor is important for the development and maintenance of the sympathetic and sensory nervous systems. Extracellular ligand for the NTRK1 and NGFR receptors, activates cellular signaling cascades to regulate neuronal proliferation, differentiation and survival. The immature NGF precursor (proNGF) functions as a ligand for the heterodimeric receptor formed by SORCS2 and NGFR, and activates cellular signaling cascades that lead to inactivation of RAC1 and/or RAC2, reorganization of the actin cytoskeleton and neuronal growth cone collapse. In contrast to mature NGF, the precursor form (proNGF) promotes neuronal apoptosis (in vitro). Inhibits metalloproteinase-dependent proteolysis of platelet glycoprotein VI. Binds lysophosphatidylinositol and lysophosphatidylserine between the two chains of the homodimer. The lipid-bound form promotes histamine relase from mast cells, contrary to the lipid-free form. The protein is Beta-nerve growth factor (NGF) of Homo sapiens (Human).